A 399-amino-acid chain; its full sequence is 26S proteasome regulatory subunit S10B homolog B (399 aa).

180 to 187 (GPPGTGKT) is an ATP binding site. Residue Lys203 forms a Glycyl lysine isopeptide (Lys-Gly) (interchain with G-Cter in ubiquitin) linkage.

It belongs to the AAA ATPase family. Component of the 19S regulatory particle (RP/PA700) base subcomplex of the 26S proteasome. The 26S proteasome is composed of a core protease (CP), known as the 20S proteasome, capped at one or both ends by the 19S regulatory particle (RP/PA700). The RP/PA700 complex is composed of at least 17 different subunits in two subcomplexes, the base and the lid, which form the portions proximal and distal to the 20S proteolytic core, respectively.

The protein resides in the cytoplasm. It localises to the nucleus. Its function is as follows. The 26S proteasome is involved in the ATP-dependent degradation of ubiquitinated proteins. The regulatory (or ATPase) complex confers ATP dependency and substrate specificity to the 26S complex. In Arabidopsis thaliana (Mouse-ear cress), this protein is 26S proteasome regulatory subunit S10B homolog B (RPT4B).